The sequence spans 519 residues: NADH-quinone oxidoreductase subunit N (519 aa).

Helical transmembrane passes span 14–34, 44–64, 82–102, 117–137, 167–187, 209–229, 249–269, 278–298, 307–327, 359–379, 407–427, 431–451, and 487–507; these read LLPA…EVFL, AVLT…TMFE, FLTF…VSFL, LFAS…TLFV, FILG…LYGA, GLVY…VAAV, LMSV…FFMV, LLGL…LLAI, LAYS…ALFV, ILYY…IVSV, WAFA…TIGF, LLIF…VGVL, and LALV…GPIM.

It belongs to the complex I subunit 2 family. As to quaternary structure, NDH-1 is composed of 14 different subunits. Subunits NuoA, H, J, K, L, M, N constitute the membrane sector of the complex.

It is found in the cell inner membrane. The catalysed reaction is a quinone + NADH + 5 H(+)(in) = a quinol + NAD(+) + 4 H(+)(out). NDH-1 shuttles electrons from NADH, via FMN and iron-sulfur (Fe-S) centers, to quinones in the respiratory chain. The immediate electron acceptor for the enzyme in this species is believed to be ubiquinone. Couples the redox reaction to proton translocation (for every two electrons transferred, four hydrogen ions are translocated across the cytoplasmic membrane), and thus conserves the redox energy in a proton gradient. The protein is NADH-quinone oxidoreductase subunit N of Myxococcus xanthus (strain DK1622).